Reading from the N-terminus, the 310-residue chain is GTPase Era (310 aa).

An Era-type G domain is found at H17–A184. Residues G25–S32 form a G1 region. G25–S32 lines the GTP pocket. A G2 region spans residues Q51–A55. Residues D72 to G75 are G3. GTP-binding positions include D72–I76 and N134–D137. The tract at residues N134 to D137 is G4. The interval V163 to A165 is G5. The KH type-2 domain occupies L215 to E292.

The protein belongs to the TRAFAC class TrmE-Era-EngA-EngB-Septin-like GTPase superfamily. Era GTPase family. As to quaternary structure, monomer.

It localises to the cytoplasm. The protein localises to the cell inner membrane. Its function is as follows. An essential GTPase that binds both GDP and GTP, with rapid nucleotide exchange. Plays a role in 16S rRNA processing and 30S ribosomal subunit biogenesis and possibly also in cell cycle regulation and energy metabolism. In Mesorhizobium japonicum (strain LMG 29417 / CECT 9101 / MAFF 303099) (Mesorhizobium loti (strain MAFF 303099)), this protein is GTPase Era.